A 306-amino-acid chain; its full sequence is Secretory carrier-associated membrane protein 1 (306 aa).

The tract at residues 1–66 (MAGRYDSNPF…LPPEPAAFGA (66 aa)) is disordered. The Cytoplasmic segment spans residues 1–141 (MAGRYDSNPF…EIPSHLQRMQ (141 aa)). Gly residues predominate over residues 25–36 (KAGGQPSYGGGA). Low complexity predominate over residues 40 to 55 (PNPRNVPSVSSNSRLS). Positions 72–109 (LDSSKDLKNREKELQAREAELNKREKELKRREEAAARA) form a coiled coil. The next 4 membrane-spanning stretches (helical) occupy residues 142–162 (YVAF…VIAV), 174–194 (IWLL…VLWY), 209–229 (FGLF…SAVA), and 257–277 (IFYF…IWVI). The Cytoplasmic portion of the chain corresponds to 278–306 (QQVYMYFRGSGKAAEMKRDATRGAMRAAF).

The protein belongs to the SCAMP family.

The protein localises to the cell membrane. The protein resides in the cytoplasmic vesicle. Its subcellular location is the secretory vesicle membrane. In terms of biological role, probably involved in membrane trafficking. The chain is Secretory carrier-associated membrane protein 1 (SCAMP1) from Oryza sativa subsp. japonica (Rice).